Here is a 92-residue protein sequence, read N- to C-terminus: Small ribosomal subunit protein uS15c (92 aa).

It belongs to the universal ribosomal protein uS15 family. As to quaternary structure, part of the 30S ribosomal subunit.

Its subcellular location is the plastid. The protein localises to the chloroplast. This Carica papaya (Papaya) protein is Small ribosomal subunit protein uS15c (rps15).